A 647-amino-acid chain; its full sequence is Probable inactive receptor kinase RLK902 (647 aa).

The signal sequence occupies residues 1–29 (MRLFFTPSMSNLSIFFSILLLSLPLPSIG). 5 LRR repeats span residues 69 to 93 (GGRVTALRLPGETLSGHIPEGIFGN), 94 to 118 (LTQLRTLSLRLNGLTGSLPLDLGSC), 119 to 142 (SDLRRLYLQGNRFSGEIPEVLFSL), 144 to 165 (NLVRLNLAENEFSGEISSGFKN), and 166 to 192 (LTRLKTLYLENNKLSGSLLDLDLSLDQ). A helical transmembrane segment spans residues 268 to 288 (GIVIGCVVGLSLIVMILMVLF). The Protein kinase domain maps to 365-639 (RASAEVLGKG…EVVRRIQELR (275 aa)). Ser367 is subject to Phosphoserine. An ATP-binding site is contributed by 371–379 (LGKGTFGTA). Residue Thr388 is modified to Phosphothreonine. Lys393 contributes to the ATP binding site. Ser444 carries the post-translational modification Phosphoserine. Thr520 bears the Phosphothreonine mark. Position 540 is a phosphoserine (Ser540). Thr618 is subject to Phosphothreonine.

It belongs to the protein kinase superfamily. Ser/Thr protein kinase family. Interacts with At3g17950, At3g27210 and At5g05190. Post-translationally, autophosphorylation. Expressed in root tips, lateral root primordia, stipules, and floral organ abscission zones.

It is found in the cell membrane. This is Probable inactive receptor kinase RLK902 (RLK902) from Arabidopsis thaliana (Mouse-ear cress).